The sequence spans 843 residues: Protein P (843 aa).

Residues 1 to 177 are terminal protein domain (TP); it reads MPLSYQHFRK…FCGSPYSWEQ (177 aa). The segment at 178–346 is spacer; that stretch reads ELQHGRLVFQ…YCLSHIVNLL (169 aa). Positions 347 to 690 are polymerase/reverse transcriptase domain (RT); that stretch reads EDWGPCTEHG…YMNLYPVARQ (344 aa). One can recognise a Reverse transcriptase domain in the interval 357-600; that stretch reads EHHIRIPRTP…YSLNFMGYVI (244 aa). Asp-429, Asp-551, and Asp-552 together coordinate Mg(2+).

It belongs to the hepadnaviridae P protein family.

The catalysed reaction is DNA(n) + a 2'-deoxyribonucleoside 5'-triphosphate = DNA(n+1) + diphosphate. The enzyme catalyses Endonucleolytic cleavage to 5'-phosphomonoester.. Activated by host HSP70 and HSP40 in vitro to be able to bind the epsilon loop of the pgRNA. Because deletion of the RNase H region renders the protein partly chaperone-independent, the chaperones may be needed indirectly to relieve occlusion of the RNA-binding site by this domain. Inhibited by several reverse-transcriptase inhibitors: Lamivudine, Adefovir and Entecavir. In terms of biological role, multifunctional enzyme that converts the viral RNA genome into dsDNA in viral cytoplasmic capsids. This enzyme displays a DNA polymerase activity that can copy either DNA or RNA templates, and a ribonuclease H (RNase H) activity that cleaves the RNA strand of RNA-DNA heteroduplexes in a partially processive 3'- to 5'-endonucleasic mode. Neo-synthesized pregenomic RNA (pgRNA) are encapsidated together with the P protein, and reverse-transcribed inside the nucleocapsid. Initiation of reverse-transcription occurs first by binding the epsilon loop on the pgRNA genome, and is initiated by protein priming, thereby the 5'-end of (-)DNA is covalently linked to P protein. Partial (+)DNA is synthesized from the (-)DNA template and generates the relaxed circular DNA (RC-DNA) genome. After budding and infection, the RC-DNA migrates in the nucleus, and is converted into a plasmid-like covalently closed circular DNA (cccDNA). The activity of P protein does not seem to be necessary for cccDNA generation, and is presumably released from (+)DNA by host nuclear DNA repair machinery. This Homo sapiens (Human) protein is Protein P.